Consider the following 358-residue polypeptide: Carbohydrate sulfotransferase 10 (358 aa).

Residues 1–6 (MHHQWL) are Cytoplasmic-facing. The chain crosses the membrane as a helical; Signal-anchor for type II membrane protein span at residues 7 to 27 (LLAACFWVIFMFMVASKFITL). The Lumenal segment spans residues 28–358 (TFKDPDGYGA…GYRVPDFLLN (331 aa)). A glycan (N-linked (GlcNAc...) asparagine) is linked at asparagine 101. Residues 129–135 (PKVGNTQ) and 191–199 (RDPFERLIS) each bind 3'-phosphoadenylyl sulfate. A glycan (N-linked (GlcNAc...) asparagine) is linked at asparagine 318.

This sequence belongs to the sulfotransferase 2 family. Predominantly expressed in hypertrophic, prehypertrophic and proliferative chondrocytes at E12 but is down-regulated in epiphyseal chondrocytes.

The protein resides in the golgi apparatus membrane. In terms of biological role, catalyzes the transfer of sulfate to position 3 of terminal glucuronic acid of both protein- and lipid-linked oligosaccharides. Participates in biosynthesis of HNK-1 carbohydrate structure, a sulfated glucuronyl-lactosaminyl residue carried by many neural recognition molecules, which is involved in cell interactions during ontogenetic development and in synaptic plasticity in the adult. This chain is Carbohydrate sulfotransferase 10 (CHST10), found in Gallus gallus (Chicken).